The chain runs to 58 residues: uncharacterized protein (58 aa).

This is an uncharacterized protein from Phaseolus vulgaris (Kidney bean).